Reading from the N-terminus, the 409-residue chain is Z-DNA-binding protein 1 (409 aa).

2 consecutive Z-binding domains span residues 8 to 70 (LGTG…SLGG) and 85 to 147 (SAAQ…TIYR). Glycyl lysine isopeptide (Lys-Gly) (interchain with G-Cter in ubiquitin) cross-links involve residues K17 and K43. Positions 59 to 87 (SSPAPATWSLGGDGASGDGAPEIPEDSAA) are disordered. 2 short sequence motifs (RIP homotypic interaction motif (RHIM)) span residues 183–207 (NSLI…RQTI) and 241–265 (LIHL…LERD). 2 disordered regions span residues 269–307 (HPIF…GGTT) and 323–369 (GNNN…TPSD). Over residues 270 to 290 (PIFSFSSSPPESTTTADPETA) the composition is skewed to low complexity. The span at 337 to 351 (GTKESADSQELKEDT) shows a compositional bias: basic and acidic residues.

As to quaternary structure, homodimer. Interacts (via RIP homotypic interaction motif) with RIPK3; leading to RIPK3 activation and necroptosis; interaction is enhanced by CASP6. Interacts (via RIP homotypic interaction motif) with RIPK1. Component of the AIM2 PANoptosome complex, a multiprotein complex that drives inflammatory cell death (PANoptosis). In terms of processing, ubiquitinated; polyubiquitinated following influenza A virus (IAV) infection. Phosphorylated.

The protein localises to the cytoplasm. It is found in the nucleus. Its activity is regulated as follows. ZBP1-dependent necroptosis is normally inhibited by RIPK1: RIPK1 inhibits the ZBP1-induced activation of RIPK3 via FADD-mediated recruitment of CASP8, which cleaves RIPK1 and limits TNF-induced necroptosis. In terms of biological role, key innate sensor that recognizes and binds Z-RNA structures, which are produced by a number of viruses, such as herpesvirus, orthomyxovirus or flavivirus, and triggers different forms of cell death. ZBP1 acts as an essential mediator of pyroptosis, necroptosis and apoptosis (PANoptosis), an integral part of host defense against pathogens, by activating RIPK3, caspase-8 (CASP8), and the NLRP3 inflammasome. Key activator of necroptosis, a programmed cell death process in response to death-inducing TNF-alpha family members, via its ability to bind Z-RNA: once activated upon Z-RNA-binding, ZBP1 interacts and stimulates RIPK3 kinase, which phosphorylates and activates MLKL, triggering execution of programmed necrosis. In addition to TNF-induced necroptosis, necroptosis can also take place in the nucleus in response to orthomyxoviruses infection: ZBP1 recognizes and binds Z-RNA structures that are produced in infected nuclei by orthomyxoviruses, such as the influenza A virus (IAV), leading to ZBP1 activation, RIPK3 stimulation and subsequent MLKL phosphorylation, triggering disruption of the nuclear envelope and leakage of cellular DNA into the cytosol. ZBP1-dependent cell death in response to IAV infection promotes interleukin-1 alpha (IL1A) induction in an NLRP3-inflammasome-independent manner: IL1A expression is required for the optimal interleukin-1 beta (IL1B) production, and together, these cytokines promote infiltration of inflammatory neutrophils to the lung, leading to the formation of neutrophil extracellular traps. In addition to its direct role in driving necroptosis via its ability to sense Z-RNAs, also involved in PANoptosis triggered in response to bacterial infection: component of the AIM2 PANoptosome complex, a multiprotein complex that triggers PANoptosis. Also acts as the apical sensor of fungal infection responsible for activating PANoptosis. Involved in CASP8-mediated cell death via its interaction with RIPK1 but independently of its ability to sense Z-RNAs. In some cell types, also able to restrict viral replication by promoting cell death-independent responses. In response to flavivirus infection in neurons, promotes a cell death-independent pathway that restricts viral replication: together with RIPK3, promotes a death-independent transcriptional program that modifies the cellular metabolism via up-regulation expression of the enzyme ACOD1/IRG1 and production of the metabolite itaconate. Itaconate inhibits the activity of succinate dehydrogenase, generating a metabolic state in neurons that suppresses replication of viral genomes. The chain is Z-DNA-binding protein 1 from Rattus norvegicus (Rat).